The primary structure comprises 407 residues: Betaine--homocysteine S-methyltransferase 1 (407 aa).

One can recognise a Hcy-binding domain in the interval 11–314; the sequence is KGILERLNSG…YHIRAIAEEL (304 aa). K40, K93, and K98 each carry N6-succinyllysine. Residue C217 participates in Zn(2+) binding. Residues K232 and K241 each carry the N6-succinyllysine modification. 2 residues coordinate Zn(2+): C299 and C300. S330 is subject to Phosphoserine. An N6-succinyllysine mark is found at K340 and K377.

As to quaternary structure, homotetramer. The cofactor is Zn(2+).

Its subcellular location is the cytoplasm. It localises to the cytosol. It is found in the nucleus. It carries out the reaction L-homocysteine + glycine betaine = N,N-dimethylglycine + L-methionine. It functions in the pathway amine and polyamine degradation; betaine degradation; sarcosine from betaine: step 1/2. The protein operates within amino-acid biosynthesis; L-methionine biosynthesis via de novo pathway; L-methionine from L-homocysteine (BhmT route): step 1/1. In terms of biological role, involved in the regulation of homocysteine metabolism. Converts betaine and homocysteine to dimethylglycine and methionine, respectively. This reaction is also required for the irreversible oxidation of choline. This Bos taurus (Bovine) protein is Betaine--homocysteine S-methyltransferase 1 (BHMT).